A 277-amino-acid polypeptide reads, in one-letter code: uncharacterized protein (277 aa).

Disordered regions lie at residues Lys33–Arg168 and Asn210–Phe277. The span at Asn34–Ser45 shows a compositional bias: basic and acidic residues. Basic residues predominate over residues Leu86 to Ser99. 3 stretches are compositionally biased toward basic and acidic residues: residues Lys100–Val113, Ala151–Arg168, and Thr216–Lys230. The segment covering Asp231 to Arg241 has biased composition (basic residues). Residues Arg242–Asn258 are compositionally biased toward basic and acidic residues. Residues Lys259–Asn271 show a composition bias toward polar residues.

It localises to the cytoplasm. This is an uncharacterized protein from Saccharomyces cerevisiae (strain ATCC 204508 / S288c) (Baker's yeast).